A 355-amino-acid chain; its full sequence is Phosphoribosylformylglycinamidine cyclo-ligase (355 aa).

Belongs to the AIR synthase family.

It localises to the cytoplasm. It carries out the reaction 2-formamido-N(1)-(5-O-phospho-beta-D-ribosyl)acetamidine + ATP = 5-amino-1-(5-phospho-beta-D-ribosyl)imidazole + ADP + phosphate + H(+). Its pathway is purine metabolism; IMP biosynthesis via de novo pathway; 5-amino-1-(5-phospho-D-ribosyl)imidazole from N(2)-formyl-N(1)-(5-phospho-D-ribosyl)glycinamide: step 2/2. This Paraburkholderia phymatum (strain DSM 17167 / CIP 108236 / LMG 21445 / STM815) (Burkholderia phymatum) protein is Phosphoribosylformylglycinamidine cyclo-ligase.